The chain runs to 440 residues: Discs overgrown protein kinase (440 aa).

The region spanning 9 to 277 is the Protein kinase domain; sequence YRLGRKIGSG…HLRKLFRNLF (269 aa). Residues 15-23 and Lys38 each bind ATP; that span reads IGSGSFGDI. The active-site Proton acceptor is Asp128. Positions 221–224 are nuclear localization signal; essential for interaction with Bdbt and important for nuclear localization; the sequence is KRQK. Phosphoserine occurs at positions 333 and 334. The interval 376–440 is disordered; the sequence is SQLIGGNGLN…GGGGGVGNAK (65 aa). Residues 413–440 are compositionally biased toward gly residues; it reads QGGGGGGGGVGVGGMPSGGGGGGVGNAK.

This sequence belongs to the protein kinase superfamily. CK1 Ser/Thr protein kinase family. Casein kinase I subfamily. In terms of assembly, forms a complex with per. Interacts with Dlish. Interacts (via nuclear localization signal) with Bdbt. In terms of tissue distribution, detected in the head (at protein level). Expressed in photoreceptor cells of the eyes as well as in the region situated between the optic lobe and the central brain.

The protein localises to the nucleus. The protein resides in the cytoplasm. It localises to the cytosol. It carries out the reaction L-seryl-[protein] + ATP = O-phospho-L-seryl-[protein] + ADP + H(+). It catalyses the reaction L-threonyl-[protein] + ATP = O-phospho-L-threonyl-[protein] + ADP + H(+). Serine/threonine-protein kinase which is involved in the circadian rhythm pathway, viability and planar cell polarity. In the circadian rhythm pathway, phosphorylates the clock gene period (per) and targets it for degradation in the absence of timeless (tim), thus contributing to production of the circadian oscillations of the clock genes. Together with CkIalpha, regulates processing of ci by phosphorylating it, which promotes its binding to slmb, the F-box recognition component of the SCF(slmb) E3 ubiquitin-protein ligase. Involved in the inhibition of apoptosis during cell proliferation and growth arrest in imaginal disks. Also functions in planar cell polarity. This chain is Discs overgrown protein kinase (dco), found in Drosophila melanogaster (Fruit fly).